The primary structure comprises 155 residues: 6,7-dimethyl-8-ribityllumazine synthase (155 aa).

5-amino-6-(D-ribitylamino)uracil contacts are provided by residues F23, 57–59, and 80–82; these read AFE and AVI. Residue 85-86 coordinates (2S)-2-hydroxy-3-oxobutyl phosphate; sequence AT. H88 acts as the Proton donor in catalysis. A 5-amino-6-(D-ribitylamino)uracil-binding site is contributed by Y113. R127 serves as a coordination point for (2S)-2-hydroxy-3-oxobutyl phosphate.

Belongs to the DMRL synthase family.

It carries out the reaction (2S)-2-hydroxy-3-oxobutyl phosphate + 5-amino-6-(D-ribitylamino)uracil = 6,7-dimethyl-8-(1-D-ribityl)lumazine + phosphate + 2 H2O + H(+). It functions in the pathway cofactor biosynthesis; riboflavin biosynthesis; riboflavin from 2-hydroxy-3-oxobutyl phosphate and 5-amino-6-(D-ribitylamino)uracil: step 1/2. Functionally, catalyzes the formation of 6,7-dimethyl-8-ribityllumazine by condensation of 5-amino-6-(D-ribitylamino)uracil with 3,4-dihydroxy-2-butanone 4-phosphate. This is the penultimate step in the biosynthesis of riboflavin. This Moorella thermoacetica (strain ATCC 39073 / JCM 9320) protein is 6,7-dimethyl-8-ribityllumazine synthase.